We begin with the raw amino-acid sequence, 168 residues long: Pathogenesis-related protein 1A (168 aa).

Residues 1-30 (MGFVLFSQLPSFLLVSTLLLFLVISHSCRA) form the signal peptide. The SCP domain maps to 38-156 (LDAHNTARAD…NGGYVVSCNY (119 aa)).

Belongs to the CRISP family. In terms of processing, three disulfide bonds are present.

Its subcellular location is the vacuole. Probably involved in the defense reaction of plants against pathogens. The protein is Pathogenesis-related protein 1A of Nicotiana tabacum (Common tobacco).